The sequence spans 240 residues: Transcription factor bHLH47 (240 aa).

The segment covering 1-13 (MVSKTPSTSSDEA) has biased composition (polar residues). Positions 1–26 (MVSKTPSTSSDEANATADERCRKGKV) are disordered. In terms of domain architecture, bHLH spans 27–77 (PKRINKAVRERLKREHLNELFIELADTLELNQQNSGKASILCEATRFLKDV). A coiled-coil region spans residues 98–131 (VTTEKNELKEETSVLETEISKLQNEIEARANQSK). Over residues 128 to 138 (NQSKPDLNTSP) the composition is skewed to polar residues. Residues 128-153 (NQSKPDLNTSPAPEYHHHHYQQQHPE) form a disordered region.

In terms of assembly, homodimer. Forms heterodimer with PYEL proteins bHLH115, bHLH104 and ILR3. As to expression, expressed constitutively in roots, leaves, stems, and flowers.

The protein localises to the nucleus. In Arabidopsis thaliana (Mouse-ear cress), this protein is Transcription factor bHLH47 (BHLH47).